The sequence spans 249 residues: MKFYKYCASGNDFVITNADRKEDRSALAKELCNRYEGIGADGFIVILPHEKYDFEWEFYNNDGSRAAMCGNGSRAAAHFVHHINKINPNMSFLTGAGVIKAKVNQDKVEVSLGKIKSVQNTFEELGKTWQLCNTGVPHLVHFCQNLDEFDTMLCQKMRQKYNANVNFVKILDENHLKVRTYERGVEDETLACGTGMGACFYLAFLNKKVQNKVKITPKSGEEVGFAYKNEELFFEGKVKYCFEANYNFS.

Substrate contacts are provided by Asn-11 and Asn-60. The active-site Proton donor is the Cys-69. Residues 70-71, Asn-164, and 182-183 contribute to the substrate site; these read GN and ER. Cys-192 acts as the Proton acceptor in catalysis. 193 to 194 contributes to the substrate binding site; sequence GT.

This sequence belongs to the diaminopimelate epimerase family. In terms of assembly, homodimer.

It localises to the cytoplasm. The enzyme catalyses (2S,6S)-2,6-diaminopimelate = meso-2,6-diaminopimelate. It participates in amino-acid biosynthesis; L-lysine biosynthesis via DAP pathway; DL-2,6-diaminopimelate from LL-2,6-diaminopimelate: step 1/1. Its function is as follows. Catalyzes the stereoinversion of LL-2,6-diaminopimelate (L,L-DAP) to meso-diaminopimelate (meso-DAP), a precursor of L-lysine and an essential component of the bacterial peptidoglycan. The protein is Diaminopimelate epimerase of Campylobacter jejuni subsp. jejuni serotype O:6 (strain 81116 / NCTC 11828).